The following is a 125-amino-acid chain: Large ribosomal subunit protein uL22c (125 aa).

Belongs to the universal ribosomal protein uL22 family. As to quaternary structure, part of the 50S ribosomal subunit.

It localises to the plastid. The protein localises to the chloroplast. In terms of biological role, this protein binds specifically to 23S rRNA. The globular domain of the protein is located near the polypeptide exit tunnel on the outside of the subunit, while an extended beta-hairpin is found that lines the wall of the exit tunnel in the center of the 70S ribosome. The polypeptide is Large ribosomal subunit protein uL22c (rpl22) (Huperzia lucidula (Shining clubmoss)).